Consider the following 259-residue polypeptide: Probable dihydroorotate dehydrogenase B (NAD(+)), electron transfer subunit (259 aa).

In terms of domain architecture, FAD-binding FR-type spans 1–89 (MLPLNVTITQ…RGPFGKGFTL (89 aa)). Residues C211, C216, C219, and C229 each contribute to the [2Fe-2S] cluster site.

It belongs to the PyrK family. As to quaternary structure, heterotetramer of 2 PyrK and 2 PyrD type B subunits. It depends on [2Fe-2S] cluster as a cofactor. FAD is required as a cofactor.

Its pathway is pyrimidine metabolism; UMP biosynthesis via de novo pathway; orotate from (S)-dihydroorotate (NAD(+) route): step 1/1. In terms of biological role, responsible for channeling the electrons from the oxidation of dihydroorotate from the FMN redox center in the PyrD type B subunit to the ultimate electron acceptor NAD(+). The chain is Probable dihydroorotate dehydrogenase B (NAD(+)), electron transfer subunit from Methanosarcina acetivorans (strain ATCC 35395 / DSM 2834 / JCM 12185 / C2A).